The following is a 195-amino-acid chain: Sec-independent protein translocase protein TatB (195 aa).

A helical membrane pass occupies residues 1–21 (MFDIGFSELVLIFIVGLVVLG). The segment at 166 to 195 (DESQFAAYYPPDDDLASPTPSQPQDKQNVS) is disordered. The segment covering 183 to 195 (PTPSQPQDKQNVS) has biased composition (polar residues).

It belongs to the TatB family. The Tat system comprises two distinct complexes: a TatABC complex, containing multiple copies of TatA, TatB and TatC subunits, and a separate TatA complex, containing only TatA subunits. Substrates initially bind to the TatABC complex, which probably triggers association of the separate TatA complex to form the active translocon.

Its subcellular location is the cell inner membrane. Its function is as follows. Part of the twin-arginine translocation (Tat) system that transports large folded proteins containing a characteristic twin-arginine motif in their signal peptide across membranes. Together with TatC, TatB is part of a receptor directly interacting with Tat signal peptides. TatB may form an oligomeric binding site that transiently accommodates folded Tat precursor proteins before their translocation. In Actinobacillus pleuropneumoniae serotype 5b (strain L20), this protein is Sec-independent protein translocase protein TatB.